A 51-amino-acid polypeptide reads, in one-letter code: VTVDCSGYPKPACTLEYFPLCGSDNQTYANKCTFCNAVVEKNVTLNHLGEC.

One can recognise a Kazal-like domain in the interval 3 to 51 (VDCSGYPKPACTLEYFPLCGSDNQTYANKCTFCNAVVEKNVTLNHLGEC). Cystine bridges form between cysteine 5/cysteine 35, cysteine 13/cysteine 32, and cysteine 21/cysteine 51. N-linked (GlcNAc...) asparagine glycosylation occurs at asparagine 42.

It localises to the secreted. This is Ovomucoid from Nothoprocta perdicaria (Chilean tinamou).